The chain runs to 254 residues: Protein orai-2 (254 aa).

4 consecutive transmembrane segments (helical) span residues 66 to 83, 94 to 114, 148 to 168, and 196 to 216; these read TSAL…EVQL, LIAF…ALLI, LAWG…VVLL, and AALV…VFTI.

It belongs to the Orai family. In terms of assembly, oligomerizes in homomeric and heteromeric ORAI complexes. Native CRAC channels most likely consist of hexameric ORAI heteromers, implying that diverse ORAI1, ORAI2 and ORAI3 subunit combinations with distinct biophysical properties can operate in a cell-type specific way. Interacts with STIM1; this regulates channel activity. Interacts with CRACR2A/EFCAB4B.

The protein localises to the cell membrane. The catalysed reaction is Ca(2+)(in) = Ca(2+)(out). With respect to regulation, CRAC channels are regulated by fast Ca(2+)-dependent inactivation (FCDI), a mechanism that limits Ca(2+) influx and cell toxicity. ORAI2 channels display prominent FCDI. Inhibited by lanthanides such as Gd(3+) ions. Functionally, pore-forming subunit of inward rectifying Ca(2+) release-activated Ca(2+) (CRAC) channels. Assembles with ORAI1 and ORAI3 to form hexameric CRAC channels that mediate Ca(2+) influx upon depletion of endoplasmic reticulum Ca(2+) store and channel activation by Ca(2+) sensor STIM1, a process known as store-operated Ca(2+) entry (SOCE). Various pore subunit combinations may account for distinct CRAC channel spatiotemporal and cell-type specific dynamics. ORAI1 mainly contributes to the generation of Ca(2+) plateaus involved in sustained Ca(2+) entry and is dispensable for cytosolic Ca(2+) oscillations, whereas ORAI2 and ORAI3 generate oscillatory patterns. CRAC channels assemble in Ca(2+) signaling microdomains where Ca(2+) influx is coupled to calmodulin and calcineurin signaling and activation of NFAT transcription factors recruited to ORAI1 via AKAP5. CRAC channels are the main pathway for Ca(2+) influx in T cells and promote the immune response to pathogens by activating NFAT-dependent cytokine and chemokine transcription. The protein is Protein orai-2 (ORAI2) of Homo sapiens (Human).